The chain runs to 44 residues: Small, acid-soluble spore protein P (44 aa).

Residues 1–44 form a disordered region; the sequence is MSQTMSKNNREAKEKKGQPEPLSGSHKVKNRNHSRQKHHAHHDM. A compositionally biased stretch (basic and acidic residues) spans 8–18; that stretch reads NNREAKEKKGQ. Over residues 26–44 the composition is skewed to basic residues; sequence HKVKNRNHSRQKHHAHHDM.

It belongs to the SspP family.

The protein localises to the spore core. This Bacillus cereus (strain ATCC 10987 / NRS 248) protein is Small, acid-soluble spore protein P.